The primary structure comprises 154 residues: Myoglobin (154 aa).

A Globin domain is found at 2 to 148; the sequence is GLSDGEWQLV…FRNDIAAKYK (147 aa). Ser-4 carries the phosphoserine modification. Position 65 (His-65) interacts with nitrite. Residue His-65 coordinates O2. Thr-68 is modified (phosphothreonine). His-94 lines the heme b pocket.

It belongs to the globin family. Monomeric.

The protein localises to the cytoplasm. Its subcellular location is the sarcoplasm. The catalysed reaction is Fe(III)-heme b-[protein] + nitric oxide + H2O = Fe(II)-heme b-[protein] + nitrite + 2 H(+). The enzyme catalyses H2O2 + AH2 = A + 2 H2O. In terms of biological role, monomeric heme protein which primary function is to store oxygen and facilitate its diffusion within muscle tissues. Reversibly binds oxygen through a pentacoordinated heme iron and enables its timely and efficient release as needed during periods of heightened demand. Depending on the oxidative conditions of tissues and cells, and in addition to its ability to bind oxygen, it also has a nitrite reductase activity whereby it regulates the production of bioactive nitric oxide. Under stress conditions, like hypoxia and anoxia, it also protects cells against reactive oxygen species thanks to its pseudoperoxidase activity. This Erinaceus europaeus (Western European hedgehog) protein is Myoglobin (MB).